Here is a 138-residue protein sequence, read N- to C-terminus: Basic phospholipase A2 BP-I (138 aa).

The first 16 residues, 1–16 (MRTLWIMAVLLLGVDG), serve as a signal peptide directing secretion. 7 cysteine pairs are disulfide-bonded: cysteine 42/cysteine 132, cysteine 44/cysteine 60, cysteine 59/cysteine 112, cysteine 65/cysteine 138, cysteine 66/cysteine 105, cysteine 73/cysteine 98, and cysteine 91/cysteine 103. Positions 45 and 47 each coordinate Ca(2+). Histidine 63 is an active-site residue. The active site involves aspartate 106.

Belongs to the phospholipase A2 family. Group II subfamily. K49 sub-subfamily. Requires Ca(2+) as cofactor. Expressed by the venom gland.

Its subcellular location is the secreted. It catalyses the reaction a 1,2-diacyl-sn-glycero-3-phosphocholine + H2O = a 1-acyl-sn-glycero-3-phosphocholine + a fatty acid + H(+). Its function is as follows. Snake venom phospholipase A2 (PLA2) that has strong myotoxic activity with a low phospholipase A2 activity. PLA2 catalyzes the calcium-dependent hydrolysis of the 2-acyl groups in 3-sn-phosphoglycerides. The polypeptide is Basic phospholipase A2 BP-I (Protobothrops flavoviridis (Habu)).